The sequence spans 122 residues: Large ribosomal subunit protein uL14 (122 aa).

It belongs to the universal ribosomal protein uL14 family. In terms of assembly, part of the 50S ribosomal subunit. Forms a cluster with proteins L3 and L19. In the 70S ribosome, L14 and L19 interact and together make contacts with the 16S rRNA in bridges B5 and B8.

In terms of biological role, binds to 23S rRNA. Forms part of two intersubunit bridges in the 70S ribosome. The polypeptide is Large ribosomal subunit protein uL14 (Borrelia turicatae (strain 91E135)).